The following is a 340-amino-acid chain: Phosphate acyltransferase (340 aa).

The protein belongs to the PlsX family. Homodimer. Probably interacts with PlsY.

It localises to the cytoplasm. The catalysed reaction is a fatty acyl-[ACP] + phosphate = an acyl phosphate + holo-[ACP]. It functions in the pathway lipid metabolism; phospholipid metabolism. In terms of biological role, catalyzes the reversible formation of acyl-phosphate (acyl-PO(4)) from acyl-[acyl-carrier-protein] (acyl-ACP). This enzyme utilizes acyl-ACP as fatty acyl donor, but not acyl-CoA. In Leptospira biflexa serovar Patoc (strain Patoc 1 / ATCC 23582 / Paris), this protein is Phosphate acyltransferase.